Reading from the N-terminus, the 31-residue chain is Photosystem II reaction center protein M (31 aa).

Residues 5–25 (ILALMATALFIIIPTAFLIIL) traverse the membrane as a helical segment.

This sequence belongs to the PsbM family. As to quaternary structure, PSII is composed of 1 copy each of membrane proteins PsbA, PsbB, PsbC, PsbD, PsbE, PsbF, PsbH, PsbI, PsbJ, PsbK, PsbL, PsbM, PsbT, PsbX, PsbY, PsbZ, Psb30/Ycf12, at least 3 peripheral proteins of the oxygen-evolving complex and a large number of cofactors. It forms dimeric complexes.

Its subcellular location is the plastid. It is found in the chloroplast thylakoid membrane. Functionally, one of the components of the core complex of photosystem II (PSII). PSII is a light-driven water:plastoquinone oxidoreductase that uses light energy to abstract electrons from H(2)O, generating O(2) and a proton gradient subsequently used for ATP formation. It consists of a core antenna complex that captures photons, and an electron transfer chain that converts photonic excitation into a charge separation. This subunit is found at the monomer-monomer interface. The polypeptide is Photosystem II reaction center protein M (Mesostigma viride (Green alga)).